The sequence spans 263 residues: N-acyl homoserine lactonase AttM (263 aa).

Zn(2+) contacts are provided by histidine 103, histidine 105, aspartate 107, histidine 108, histidine 180, aspartate 202, and histidine 247.

It belongs to the metallo-beta-lactamase superfamily. The cofactor is Zn(2+).

It catalyses the reaction an N-acyl-L-homoserine lactone + H2O = an N-acyl-L-homoserine + H(+). This chain is N-acyl homoserine lactonase AttM, found in Azorhizobium caulinodans (strain ATCC 43989 / DSM 5975 / JCM 20966 / LMG 6465 / NBRC 14845 / NCIMB 13405 / ORS 571).